Reading from the N-terminus, the 379-residue chain is MFTIITGAQFGDEGKGKIVDLLAKDYDVVARFQGGNNAGHTVKVGDEVYKLHLIPSGILLDARVLIGPGVVLNPEVLAEEIEMFEKHGVKVNSEKLGVDAKTSIIMPYHIELDGLREASRETKIGTTKRGIGYAYIDKVARDEIRMAELVDKERFLARLEELAPQKEKEIEAMGGDPRIVRDPELIKRYLELGEQFAAYITDVSREINQALDEGKNVMAEAAQGTHLDVIHGTQKFVTSSSTIAGSACANLGVGPTRVDNVIAIVKAYITRVGEGPLPTELIGELGERIQKAGGEFGTTTGRGRRCGWFDLPLLKKAIALNGYTEISLTKLDVLTGLDPLRSAQVMSIKGKNWTILRNLRKTSRHAALCMKTCQDGKKN.

Residues 11 to 17 (GDEGKGK) and 39 to 41 (GHT) each bind GTP. The active-site Proton acceptor is Asp12. Mg(2+)-binding residues include Asp12 and Gly39. IMP contacts are provided by residues 12-15 (DEGK), 37-40 (NAGH), Thr127, Arg141, Gln223, Thr238, and Arg302. The active-site Proton donor is His40. A substrate-binding site is contributed by 298–304 (TTTGRGR). GTP contacts are provided by residues Arg304 and 330–332 (KLD).

Belongs to the adenylosuccinate synthetase family. As to quaternary structure, homodimer. It depends on Mg(2+) as a cofactor.

Its subcellular location is the cytoplasm. The catalysed reaction is IMP + L-aspartate + GTP = N(6)-(1,2-dicarboxyethyl)-AMP + GDP + phosphate + 2 H(+). Its pathway is purine metabolism; AMP biosynthesis via de novo pathway; AMP from IMP: step 1/2. Its function is as follows. Plays an important role in the de novo pathway of purine nucleotide biosynthesis. Catalyzes the first committed step in the biosynthesis of AMP from IMP. In Methanosarcina mazei (strain ATCC BAA-159 / DSM 3647 / Goe1 / Go1 / JCM 11833 / OCM 88) (Methanosarcina frisia), this protein is Adenylosuccinate synthetase.